Consider the following 90-residue polypeptide: MANSPSAKKRAKQAEKRRSHNASLRSMVRTYIKNVVKAIDAKDAEKAQAAYVLAVPVIDRMADKGIIHKNKAARHKSRLNGHVKALKAAA.

Residues 1-25 (MANSPSAKKRAKQAEKRRSHNASLR) form a disordered region. The segment covering 7-20 (AKKRAKQAEKRRSH) has biased composition (basic residues).

The protein belongs to the bacterial ribosomal protein bS20 family.

Binds directly to 16S ribosomal RNA. The protein is Small ribosomal subunit protein bS20 of Pseudomonas fluorescens (strain Pf0-1).